Consider the following 429-residue polypeptide: Na(+)/H(+) antiporter NhaA 1 (429 aa).

The next 12 helical transmembrane spans lie at 32 to 52 (ISGG…NSPW), 73 to 93 (LSVQ…VAGL), 111 to 131 (VVPV…YSLL), 140 to 160 (GWAI…AVVG), 170 to 190 (FLLT…AVAY), 193 to 213 (ELSV…TLLV), 219 to 239 (AWWL…ASGV), 243 to 263 (VAGV…AGGP), 284 to 304 (VAVP…LGGL), 316 to 336 (VVVG…WLVA), 349 to 369 (WVDV…SLLI), and 383 to 403 (HVKV…TVVL).

Belongs to the NhaA Na(+)/H(+) (TC 2.A.33) antiporter family.

The protein resides in the cell membrane. It carries out the reaction Na(+)(in) + 2 H(+)(out) = Na(+)(out) + 2 H(+)(in). Its function is as follows. Na(+)/H(+) antiporter that extrudes sodium in exchange for external protons. The sequence is that of Na(+)/H(+) antiporter NhaA 1 from Frankia alni (strain DSM 45986 / CECT 9034 / ACN14a).